The following is a 763-amino-acid chain: Putative pentatricopeptide repeat-containing protein At1g74580 (763 aa).

PPR repeat units lie at residues 39–69, 75–109, 110–144, 145–179, 180–214, 215–249, 250–284, 285–319, 320–354, 355–389, 390–424, 425–459, 460–494, 495–529, 530–564, 565–595, 601–635, 636–670, and 671–705; these read TLSTYRSVIEKLGYYGKFEAMEEVLVDMREN, LEGVYVGAMKNYGRKGKVQEAVNVFERMDFYDCEP, TVFSYNAIMSVLVDSGYFDQAHKVYMRMRDRGITP, DVYSFTIRMKSFCKTSRPHAALRLLNNMSSQGCEM, NVVAYCTVVGGFYEENFKAEGYELFGKMLASGVSL, CLSTFNKLLRVLCKKGDVKECEKLLDKVIKRGVLP, NLFTYNLFIQGLCQRGELDGAVRMVGCLIEQGPKP, DVITYNNLIYGLCKNSKFQEAEVYLGKMVNEGLEP, DSYTYNTLIAGYCKGGMVQLAERIVGDAVFNGFVP, DQFTYRSLIDGLCHEGETNRALALFNEALGKGIKP, NVILYNTLIKGLSNQGMILEAAQLANEMSEKGLIP, EVQTFNILVNGLCKMGCVSDADGLVKVMISKGYFP, DIFTFNILIHGYSTQLKMENALEILDVMLDNGVDP, DVYTYNSLLNGLCKTSKFEDVMETYKTMVEKGCAP, NLFTFNILLESLCRYRKLDEALGLLEEMKNKSVNP, DAVTFGTLIDGFCKNGDLDGAYTLFRKMEEA, STPTYNIIIHAFTEKLNVTMAEKLFQEMVDRCLGP, DGYTYRLMVDGFCKTGNVNLGYKFLLEMMENGFIP, and SLTTLGRVINCLCVEDRVYEAAGIIHRMVQKGLVP.

This sequence belongs to the PPR family. P subfamily.

The sequence is that of Putative pentatricopeptide repeat-containing protein At1g74580 from Arabidopsis thaliana (Mouse-ear cress).